A 499-amino-acid polypeptide reads, in one-letter code: Endosomal/lysosomal proton channel TMEM175 (499 aa).

The Cytoplasmic segment spans residues 1–30; sequence MSRLQTEEQAVDSEGDSSLHRRNEEGTQSS. The disordered stretch occupies residues 1–30; the sequence is MSRLQTEEQAVDSEGDSSLHRRNEEGTQSS. A Phosphothreonine modification is found at threonine 6. A helical membrane pass occupies residues 31–53; the sequence is HRMLGFSDALLSIIATVMILPVT. Positions 32–38 match the RxxxFSD motif 1 motif; it reads RMLGFSD. The Lumenal segment spans residues 54 to 74; it reads HTEISPEQQFDKSIQKLLATR. The tract at residues 55-60 is short helix H1-1; the sequence is TEISPE. The interval 62-68 is short helix H2-1; the sequence is QFDKSIQ. Residues 75-97 form a helical membrane-spanning segment; it reads IAVYLMTFLIVTVAWTAHTRLFQ. Residues 98-103 are Cytoplasmic-facing; it reads VVGKID. Residues 104–125 traverse the membrane as a helical segment; that stretch reads DTLALLNLACMMTITLLPYTFS. Residues 126 to 135 are Lumenal-facing; it reads LMVTFPDVPL. The helical transmembrane segment at 136-157 threads the bilayer; that stretch reads GIFLFCVCVIAIGSVQAMIVGY. Residues 158 to 181 are Cytoplasmic-facing; that stretch reads AFHFPHLLNPQIQCSTHRDLSRRH. The chain crosses the membrane as a helical span at residues 182–202; that stretch reads ILHLVLRGPALCFVAAVFSLF. At 203–207 the chain is on the lumenal side; the sequence is FFPLS. The helical transmembrane segment at 208–227 threads the bilayer; that stretch reads YLLMVTVIFLPHISKATTWC. At 228 to 254 the chain is on the cytoplasmic side; that stretch reads KDKLMGQRESPAHDMEPFSIDLHAPLS. Residues 255-279 form a helical membrane-spanning segment; sequence KERVEAFSDGVYAIVATLLILDICE. A RxxxFSD motif 2 motif is present at residues 257–263; it reads RVEAFSD. The Lumenal segment spans residues 280-306; the sequence is DNVPDPKDVQEKFSGSLVAALGAYGPQ. Residues 285-293 form a short helix H1-2 region; that stretch reads PKDVQEKFS. Residues 295-301 form a short helix H2-2 region; that stretch reads SLVAALG. Residues 307-329 form a helical membrane-spanning segment; the sequence is FLAYFGSFATVGLLWFAHHSLFL. Over 330 to 335 the chain is Cytoplasmic; it reads HVRKAT. Residues 336–357 form a helical membrane-spanning segment; sequence QTMGLLNILSLAFVGGLPLAYQ. The Lumenal portion of the chain corresponds to 358–372; the sequence is QTSAFARQPHDELER. The chain crosses the membrane as a helical span at residues 373-393; it reads VRVSCAIIFFASIFQFAIWTT. Residues 394 to 413 are Cytoplasmic-facing; the sequence is ALLHQTETLQPAVQFGGQEH. A helical transmembrane segment spans residues 414–437; it reads AFMFAKLALYPCASLLAFAATCLL. At 438-439 the chain is on the lumenal side; it reads SR. The chain crosses the membrane as a helical span at residues 440–466; that stretch reads FSTAIFHLMQISVPFAFLLLRLLVRLA. At 467–499 the chain is on the cytoplasmic side; sequence LAGLQVLRGLWPHHPQQDQSEPEAQSQLLPDPC.

It belongs to the TMEM175 family. As to quaternary structure, homodimer. Interacts with AKT (AKT1, AKT2 or AKT3); leading to formation of the lysoK(GF) complex, which activates the channel. Interacts with LAMP1; inhibiting the proton channel activity of TMEM175. Interacts with LAMP2; inhibiting the proton channel activity of TMEM175.

It is found in the endosome membrane. It localises to the lysosome membrane. The enzyme catalyses H(+)(in) = H(+)(out). The catalysed reaction is K(+)(in) = K(+)(out). Active at low pH (under pH 4.6): proton channel activity is activated by luminal side protons. Polyunsaturated fatty acids, such as arachidonic acid, also activate the channel activity. Proton channel activity is directly inhibited by LAMP1 or LAMP2, facilitating lysosomal acidification. Channel activity is activated following interaction with AKT (AKT1, AKT2 or AKT3): interaction promotes activation from closed to an open state. Activation by AKT is independent of AKT serine/threonine-protein kinase activity. In terms of biological role, proton-activated proton channel that catalyzes proton efflux from endosomes and lysosomes to maintain a steady-state pH. Activated at low pH (under pH 4.6) by luminal side protons: selectively mediates lysosomal proton release from lysosomes, eliciting a proton leak that balances V-ATPase activity to maintain pH homeostasis. Regulation of lumenal pH stability is required for autophagosome-lysosome fusion. Also acts as a potassium channel at higher pH, regulating potassium conductance in endosomes and lysosomes. Constitutes the pore-forming subunit of the lysoK(GF) complex, a complex activated by extracellular growth factors. The lysoK(GF) complex is composed of TMEM175 and AKT (AKT1, AKT2 or AKT3), a major target of growth factor receptors: in the complex, TMEM175 channel is opened by conformational changes by AKT, leading to its activation. The lysoK(GF) complex is required to protect neurons against stress-induced damage. The polypeptide is Endosomal/lysosomal proton channel TMEM175 (Mus musculus (Mouse)).